A 126-amino-acid chain; its full sequence is Aspartate 1-decarboxylase (126 aa).

The Schiff-base intermediate with substrate; via pyruvic acid role is filled by S25. Pyruvic acid (Ser) is present on S25. Position 57 (T57) interacts with substrate. Catalysis depends on Y58, which acts as the Proton donor. Position 73–75 (73–75 (GGA)) interacts with substrate.

Belongs to the PanD family. As to quaternary structure, heterooctamer of four alpha and four beta subunits. Pyruvate serves as cofactor. Post-translationally, is synthesized initially as an inactive proenzyme, which is activated by self-cleavage at a specific serine bond to produce a beta-subunit with a hydroxyl group at its C-terminus and an alpha-subunit with a pyruvoyl group at its N-terminus.

It is found in the cytoplasm. It carries out the reaction L-aspartate + H(+) = beta-alanine + CO2. It functions in the pathway cofactor biosynthesis; (R)-pantothenate biosynthesis; beta-alanine from L-aspartate: step 1/1. Catalyzes the pyruvoyl-dependent decarboxylation of aspartate to produce beta-alanine. The protein is Aspartate 1-decarboxylase of Xanthomonas axonopodis pv. citri (strain 306).